The following is a 161-amino-acid chain: Bacterial E2-like ubiquitin protein BilB (161 aa).

The active-site Glycyl thioester intermediate is the cysteine 113.

In terms of biological role, component of the Bil (bacterial ISG15-like) antiviral defense system, composed of BilA, BilB, BilC and BilD. The Bil system specifically conjugates a ubiquitin-like moiety (bilA) to the bacteriophage central tail fiber (CTF, or tip attachment protein J) via reactions involving E1 (bilD) and E2 (bilB). Modifies CTF of phage SECphi27 and SECphi4, which probably interferes with assembly of the phage tail. Also modifies T5 baseplate hub protein pb3 (gene D16), but not gp27 of phage T6 (Bil defends against T6). BilB probably accepts ubiquitin from the BilA-BilD (E1) complex and catalyzes its covalent attachment to target protein (CTF). Bil-encoding bacteria produce mostly defective phage SECphi27, many of which have phage assembly defects, including no tails. SECphi27 phage progeny produced in E.coli with the Bil system inject less DNA into naive host cells, maybe because the phage are less able to adsorb and inject their DNA into host cells. Its function is as follows. Expression of the Bil system in E.coli (strain MG1655) confers about 100-fold resistance to phage SECphi27, SECphi18, SECphi6, SECphi4 and T5, but not to SECphi17. When cells expressing the Bil system are infected by phage SECphi27 at low multiplicity of infection (0.03 MOI) the culture survives, at 3.0 MOI the culture collapses at the same time as cells without the Bil system. This Collimonas sp. (strain OK412) protein is Bacterial E2-like ubiquitin protein BilB.